We begin with the raw amino-acid sequence, 406 residues long: F-box/WD repeat-containing protein mec-15 (406 aa).

Residues 6 to 53 (PTELISLPSELLCHLFTYLPQRQLITEIPLVCRRFNTILNDDKFWSRR) enclose the F-box domain. WD repeat units follow at residues 101-142 (GHSA…NGED), 156-195 (AHSGWIWNMAQESTSTNFYTTSWDSTVKSWHITDNGALQN), 242-279 (LHKRAVIALAVQGDKIFTSGEDRLMMMVDRRNFSKPVL), 281-320 (EYSPTAYKSCLSLQCNQLLTSTSDGKVKLYDANNFNVLQT), and 365-406 (SHEL…DQEN).

May interact with the SCF ubiquitin ligase complex component skr-1. Expressed in several neurons in the head, tail and ventral cord, but absent in touch receptor neurons in adults. Expressed in GABAergic and cholinergic motor neurons.

The protein resides in the perikaryon. Plays a role in mechanosensory transduction (touch sensitivity), touch receptor neuron development and synapse formation. Regulates expression of the protein snb-1 and the distribution of synaptic vesicles at synapses to promote synaptic transmission at the neuromuscular junctions of GABAergic motor neurons. The chain is F-box/WD repeat-containing protein mec-15 from Caenorhabditis elegans.